Here is a 340-residue protein sequence, read N- to C-terminus: Methionine import ATP-binding protein MetN 2 (340 aa).

Residues 2–241 (ITLQNVVKEY…PKEKVTQRFV (240 aa)) form the ABC transporter domain. Residue 38–45 (GYSGAGKS) participates in ATP binding.

Belongs to the ABC transporter superfamily. Methionine importer (TC 3.A.1.24) family. As to quaternary structure, the complex is composed of two ATP-binding proteins (MetN), two transmembrane proteins (MetI) and a solute-binding protein (MetQ).

The protein resides in the cell membrane. It catalyses the reaction L-methionine(out) + ATP + H2O = L-methionine(in) + ADP + phosphate + H(+). It carries out the reaction D-methionine(out) + ATP + H2O = D-methionine(in) + ADP + phosphate + H(+). Functionally, part of the ABC transporter complex MetNIQ involved in methionine import. Responsible for energy coupling to the transport system. The chain is Methionine import ATP-binding protein MetN 2 from Listeria innocua serovar 6a (strain ATCC BAA-680 / CLIP 11262).